The primary structure comprises 330 residues: Cyclic AMP receptor-like protein E (330 aa).

The Extracellular portion of the chain corresponds to 1 to 10; that stretch reads MLSLSSYVLN. The chain crosses the membrane as a helical span at residues 11 to 31; it reads LVGSILCLIGCLFIIGHFFWI. The Cytoplasmic segment spans residues 32 to 40; the sequence is PLLRTSLSR. The chain crosses the membrane as a helical span at residues 41 to 61; it reads IIIYPTFILLLYDMVSFPSFI. The Extracellular portion of the chain corresponds to 62–85; that stretch reads SKTADLYIERSTIICNFQEAIIQY. Residues 86 to 106 form a helical membrane-spanning segment; that stretch reads LILSNFIWSVCISVNLLYLCF. At 107 to 116 the chain is on the cytoplasmic side; the sequence is SPNKNLKKNE. A helical membrane pass occupies residues 117 to 137; sequence LLYHLCSWGIPLIVVVITKIP. Over 138-156 the chain is Extracellular; sequence NMISDNGNQCRFKSPNYIK. Residues 157–177 traverse the membrane as a helical segment; that stretch reads FYLETILFIAFMLFNFIVAFI. Over 178–213 the chain is Cytoplasmic; sequence TIKHIISGNLRESETTTTSVLFVNEKKITTKKIVWR. Residues 214-234 traverse the membrane as a helical segment; it reads LLLYPSILSICYIMTLVLSIY. The Extracellular segment spans residues 235–274; sequence QFSTESYGSGGAYANSINNKRNDKNTESGNSNNNNNSYIE. A glycan (N-linked (GlcNAc...) asparagine) is linked at asparagine 269. The helical transmembrane segment at 275–295 threads the bilayer; it reads ILLYISKAIFLLQGFFNALVY. The Cytoplasmic segment spans residues 296–330; sequence LRSSKLRDRYKKITIFRKIFWRDEADYQSINDGFN.

This sequence belongs to the G-protein coupled receptor 5 family.

The protein resides in the membrane. Receptor for cAMP. This Dictyostelium discoideum (Social amoeba) protein is Cyclic AMP receptor-like protein E (crlE).